The sequence spans 270 residues: MPELPEVEVTRLGIAPHLRGRRLEGAVVRDSRLRLPVNDDLAARVSGQRLLNLRRRGKYLLLDLERGTILIHLGMSGHLRVLPQSAPVQKHDHVDLLFADDLCLRFHDPRRFGAVLWLDDADHHPLLQHLGPEPLGDVFGAEYLYQRGRNRQIPVKSFLMDAHIVVGVGNIYANESLFAAGIDPRRPAGRIALPRYMKLVQAVRTVLEAAIAQGGTTLRDFTRPDGGNGYFRLSLAVYGREGEPCTHCGAPLQGVRIGGRATIYCSQCQR.

Catalysis depends on proline 2, which acts as the Schiff-base intermediate with DNA. Residue glutamate 3 is the Proton donor of the active site. The active-site Proton donor; for beta-elimination activity is the lysine 58. The DNA site is built by histidine 91, arginine 110, and arginine 151. An FPG-type zinc finger spans residues alanine 236–arginine 270. The active-site Proton donor; for delta-elimination activity is the arginine 260.

It belongs to the FPG family. In terms of assembly, monomer. Zn(2+) serves as cofactor.

It carries out the reaction Hydrolysis of DNA containing ring-opened 7-methylguanine residues, releasing 2,6-diamino-4-hydroxy-5-(N-methyl)formamidopyrimidine.. The catalysed reaction is 2'-deoxyribonucleotide-(2'-deoxyribose 5'-phosphate)-2'-deoxyribonucleotide-DNA = a 3'-end 2'-deoxyribonucleotide-(2,3-dehydro-2,3-deoxyribose 5'-phosphate)-DNA + a 5'-end 5'-phospho-2'-deoxyribonucleoside-DNA + H(+). Involved in base excision repair of DNA damaged by oxidation or by mutagenic agents. Acts as a DNA glycosylase that recognizes and removes damaged bases. Has a preference for oxidized purines, such as 7,8-dihydro-8-oxoguanine (8-oxoG). Has AP (apurinic/apyrimidinic) lyase activity and introduces nicks in the DNA strand. Cleaves the DNA backbone by beta-delta elimination to generate a single-strand break at the site of the removed base with both 3'- and 5'-phosphates. This is Formamidopyrimidine-DNA glycosylase from Acidithiobacillus ferrooxidans (strain ATCC 23270 / DSM 14882 / CIP 104768 / NCIMB 8455) (Ferrobacillus ferrooxidans (strain ATCC 23270)).